A 597-amino-acid polypeptide reads, in one-letter code: Elongation factor 4 (597 aa).

The region spanning 2 to 184 (KHIRNFSIIA…NIVTAIPPPE (183 aa)) is the tr-type G domain. GTP-binding positions include 14–19 (DHGKST) and 131–134 (NKID).

Belongs to the TRAFAC class translation factor GTPase superfamily. Classic translation factor GTPase family. LepA subfamily.

Its subcellular location is the cell inner membrane. It carries out the reaction GTP + H2O = GDP + phosphate + H(+). Functionally, required for accurate and efficient protein synthesis under certain stress conditions. May act as a fidelity factor of the translation reaction, by catalyzing a one-codon backward translocation of tRNAs on improperly translocated ribosomes. Back-translocation proceeds from a post-translocation (POST) complex to a pre-translocation (PRE) complex, thus giving elongation factor G a second chance to translocate the tRNAs correctly. Binds to ribosomes in a GTP-dependent manner. In Vibrio atlanticus (strain LGP32) (Vibrio splendidus (strain Mel32)), this protein is Elongation factor 4.